Reading from the N-terminus, the 1855-residue chain is Chitin synthase 5 (1855 aa).

Residues 1–778 (MSSAPTTQQN…CWRQIVRAGD (778 aa)) form the Myosin motor domain. Residue 95–102 (GESGTGKT) participates in ATP binding. N-linked (GlcNAc...) asparagine glycans are attached at residues asparagine 221, asparagine 520, and asparagine 558. Residues 585-650 (AVQQASVASK…PKSADTQQGA (66 aa)) form a disordered region. The actin-binding stretch occupies residues 658–682 (LDNINKSLTAPNTNPYFFFCLKPND). N-linked (GlcNAc...) asparagine glycosylation is present at asparagine 662. 2 helical membrane passes run 887-907 (WLVL…RIIG) and 922-942 (VAIN…MVGF). The Cytochrome b5 heme-binding domain maps to 950 to 1008 (QHVFSPSELTSYDGKNSDAYVAIRGNVFDLGAFIPQHYPSIVPASALEKYAGTDATNLF). N-linked (GlcNAc...) asparagine glycosylation is found at asparagine 1037 and asparagine 1061. The chain crosses the membrane as a helical span at residues 1199-1219 (ILLAVSIMLVSVICFKFLAAL). 3 N-linked (GlcNAc...) asparagine glycosylation sites follow: asparagine 1422, asparagine 1456, and asparagine 1562. 3 consecutive transmembrane segments (helical) span residues 1587–1607 (FVVF…GYIV), 1621–1641 (ATTA…IFIV), and 1650–1670 (WMII…LIAF). N-linked (GlcNAc...) asparagine glycans are attached at residues asparagine 1755 and asparagine 1767. The DEK-C domain maps to 1797–1852 (MPNDDAILAEIREILATADLMTVTKKSIKAELERRFGVPMDSRRQYIGSATEAILS).

It in the N-terminal section; belongs to the TRAFAC class myosin-kinesin ATPase superfamily. Myosin family. The protein in the C-terminal section; belongs to the chitin synthase family. Class V subfamily.

Its subcellular location is the apical cell membrane. It is found in the cell septum. The protein localises to the cell tip. The enzyme catalyses [(1-&gt;4)-N-acetyl-beta-D-glucosaminyl](n) + UDP-N-acetyl-alpha-D-glucosamine = [(1-&gt;4)-N-acetyl-beta-D-glucosaminyl](n+1) + UDP + H(+). In terms of biological role, polymerizes chitin, a structural polymer of the cell wall and septum, by transferring the sugar moiety of UDP-GlcNAc to the non-reducing end of the growing chitin polymer. This chain is Chitin synthase 5, found in Zymoseptoria tritici (strain CBS 115943 / IPO323) (Speckled leaf blotch fungus).